A 293-amino-acid polypeptide reads, in one-letter code: Protease HtpX homolog (293 aa).

Helical transmembrane passes span I4–V24 and S40–S60. H146 lines the Zn(2+) pocket. E147 is a catalytic residue. H150 contacts Zn(2+). 2 helical membrane-spanning segments follow: residues L161–I181 and F197–W217. Position 223 (E223) interacts with Zn(2+).

Belongs to the peptidase M48B family. Zn(2+) is required as a cofactor.

The protein resides in the cell inner membrane. The polypeptide is Protease HtpX homolog (Bordetella petrii (strain ATCC BAA-461 / DSM 12804 / CCUG 43448)).